The sequence spans 242 residues: Derlin-1 (242 aa).

The Cytoplasmic portion of the chain corresponds to 1 to 20 (MSSPAEYYNSLPPISKAYGT). Residues 21 to 41 (LCFFATVLCQLQILNPPFLAL) form a helical membrane-spanning segment. Over 42–55 (YYPFVFKKFQIWRL) the chain is Lumenal. Residues 56 to 76 (FTSFFFLGKFSINFGIRLLMI) traverse the membrane as a helical segment. The Cytoplasmic portion of the chain corresponds to 77–94 (ARYGVQLEKGAFEKRTAD). A helical membrane pass occupies residues 95–115 (FLWMMIFGAISLLALSAIPFL). The Lumenal segment spans residues 116–157 (DIYFLGVPMVSMLLYVWSREYPNSQISMYGLVQLRSFYLPWA). Residues 158–178 (MLGLDVIFGSEILPGLLGILV) traverse the membrane as a helical segment. At 179–242 (GHTYYFLSVL…FRGRSYRLSQ (64 aa)) the chain is on the cytoplasmic side.

The protein belongs to the derlin family. As to expression, seedling shoots and roots.

Its subcellular location is the endoplasmic reticulum membrane. Functionally, may be involved in the degradation process of specific misfolded endoplasmic reticulum (ER) luminal proteins. The polypeptide is Derlin-1 (DER1) (Oryza sativa subsp. japonica (Rice)).